The following is a 255-amino-acid chain: Cytochrome b561 and DOMON domain-containing protein At5g48750 (255 aa).

Residues 1-27 form the signal peptide; that stretch reads MFLSSRTIFVGLCFLFVLAPCFTRATT. In terms of domain architecture, DOMON spans 54 to 169; sequence LDSFLHYSYV…TVVNHLWQDG (116 aa). One can recognise a Cytochrome b561 domain in the interval 176-255; it reads RLGMHAMSGN…DPTWFYILIL (80 aa). Residues 216–236 form a helical membrane-spanning segment; sequence IHGLVNAVCWGIFIPIGVMAA.

Its subcellular location is the membrane. The sequence is that of Cytochrome b561 and DOMON domain-containing protein At5g48750 from Arabidopsis thaliana (Mouse-ear cress).